A 514-amino-acid chain; its full sequence is Ribonuclease Y (514 aa).

The helical transmembrane segment at 3–23 threads the bilayer; the sequence is YMIIYEIIAGILIVVAILIHF. In terms of domain architecture, KH spans 204–289; that stretch reads TVHVVTLPND…EMVEKAEKEL (86 aa). One can recognise an HD domain in the interval 330–423; the sequence is VLKHSVEVAY…VQAADAISAA (94 aa).

Belongs to the RNase Y family.

Its subcellular location is the cell membrane. In terms of biological role, endoribonuclease that initiates mRNA decay. In Clostridium kluyveri (strain ATCC 8527 / DSM 555 / NBRC 12016 / NCIMB 10680 / K1), this protein is Ribonuclease Y.